A 199-amino-acid polypeptide reads, in one-letter code: NAD(P)H dehydrogenase (quinone) (199 aa).

One can recognise a Flavodoxin-like domain in the interval 4–190 (VLVLYYSAYG…AGARYQGRQI (187 aa)). Residues 10-15 (SAYGHI) and 78-80 (TRF) contribute to the FMN site. Tyr-12 is an NAD(+) binding site. Trp-98 contributes to the substrate binding site. FMN is bound by residues 113–119 (SSATQHG) and His-134.

This sequence belongs to the WrbA family. FMN is required as a cofactor.

The enzyme catalyses a quinone + NADH + H(+) = a quinol + NAD(+). It catalyses the reaction a quinone + NADPH + H(+) = a quinol + NADP(+). The chain is NAD(P)H dehydrogenase (quinone) from Bradyrhizobium diazoefficiens (strain JCM 10833 / BCRC 13528 / IAM 13628 / NBRC 14792 / USDA 110).